Reading from the N-terminus, the 165-residue chain is Cystatin-like protein (165 aa).

A signal peptide spans M1–A19. 2 disulfide bridges follow: C80–C92 and C104–C118.

Involved in hypoxia tolerance. The polypeptide is Cystatin-like protein (Clarias batrachus (Walking catfish)).